The sequence spans 118 residues: Protein Rev (118 aa).

Serine 5 is subject to Phosphoserine; by host CK2. Residues 18 to 26 form a homomultimerization region; it reads LIKILYQSN. The tract at residues 23-49 is disordered; it reads YQSNPPPSPEGTRQARRNRRRRWRARQ. A Nuclear localization signal and RNA-binding (RRE) motif is present at residues 34-50; it reads TRQARRNRRRRWRARQR. Basic residues predominate over residues 36–49; that stretch reads QARRNRRRRWRARQ. The Nuclear export signal and binding to XPO1 signature appears at 73-84; that stretch reads LQLPPLERLNLN. The segment at 89–118 is disordered; the sequence is CGASGTQGVGSPQISVESPTVLESGTEEQC. Phosphoserine; by host is present on residues serine 92 and serine 99. Polar residues predominate over residues 92 to 112; it reads SGTQGVGSPQISVESPTVLES.

The protein belongs to the HIV-1 REV protein family. As to quaternary structure, homomultimer; when bound to the RRE. Multimeric assembly is essential for activity and may involve XPO1. Binds to human KPNB1, XPO1, TNPO1, RANBP5 and IPO7. Interacts with the viral Integrase. Interacts with human KHDRBS1. Interacts with human NAP1; this interaction decreases Rev multimerization and stimulates its activity. Interacts with human DEAD-box helicases DDX3 and DDX24; these interactions may serve for viral RNA export to the cytoplasm and packaging, respectively. Interacts with human PSIP1; this interaction may inhibit HIV-1 DNA integration by promoting dissociation of the Integrase-LEDGF/p75 complex. Asymmetrically arginine dimethylated at one site by host PRMT6. Methylation impairs the RNA-binding activity and export of viral RNA from the nucleus to the cytoplasm. Post-translationally, phosphorylated by protein kinase CK2. Presence of, and maybe binding to the N-terminus of the regulatory beta subunit of CK2 is necessary for CK2-mediated Rev's phosphorylation.

It is found in the host nucleus. It localises to the host nucleolus. Its subcellular location is the host cytoplasm. In terms of biological role, escorts unspliced or incompletely spliced viral pre-mRNAs (late transcripts) out of the nucleus of infected cells. These pre-mRNAs carry a recognition sequence called Rev responsive element (RRE) located in the env gene, that is not present in fully spliced viral mRNAs (early transcripts). This function is essential since most viral proteins are translated from unspliced or partially spliced pre-mRNAs which cannot exit the nucleus by the pathway used by fully processed cellular mRNAs. Rev itself is translated from a fully spliced mRNA that readily exits the nucleus. Rev's nuclear localization signal (NLS) binds directly to KPNB1/Importin beta-1 without previous binding to KPNA1/Importin alpha-1. KPNB1 binds to the GDP bound form of RAN (Ran-GDP) and targets Rev to the nucleus. In the nucleus, the conversion from Ran-GDP to Ran-GTP dissociates Rev from KPNB1 and allows Rev's binding to the RRE in viral pre-mRNAs. Rev multimerization on the RRE via cooperative assembly exposes its nuclear export signal (NES) to the surface. Rev can then form a complex with XPO1/CRM1 and Ran-GTP, leading to nuclear export of the complex. Conversion from Ran-GTP to Ran-GDP mediates dissociation of the Rev/RRE/XPO1/RAN complex, so that Rev can return to the nucleus for a subsequent round of export. Beside KPNB1, also seems to interact with TNPO1/Transportin-1, RANBP5/IPO5 and IPO7/RANBP7 for nuclear import. The nucleoporin-like HRB/RIP is an essential cofactor that probably indirectly interacts with Rev to release HIV RNAs from the perinuclear region to the cytoplasm. This is Protein Rev from Human immunodeficiency virus type 1 group M subtype D (isolate Z2/CDC-Z34) (HIV-1).